The sequence spans 616 residues: uncharacterized protein (616 aa).

This is an uncharacterized protein from Methanocaldococcus jannaschii (strain ATCC 43067 / DSM 2661 / JAL-1 / JCM 10045 / NBRC 100440) (Methanococcus jannaschii).